Here is a 311-residue protein sequence, read N- to C-terminus: Glutaminase (311 aa).

Ser66, Asn116, Glu162, Asn169, Tyr193, Tyr245, and Val263 together coordinate substrate.

This sequence belongs to the glutaminase family. Homotetramer.

The catalysed reaction is L-glutamine + H2O = L-glutamate + NH4(+). This is Glutaminase from Rhodopseudomonas palustris (strain BisB5).